Reading from the N-terminus, the 155-residue chain is MTRKQKRLVVIAGGMSFILAAVLLVMFAFSQSVAYFYMPADLARTPVAPETRIRLGGLVGAGSVVRGAGSTVEFSVTDGSANAVKVKYTGILPDLFREGQGVVTEGMFAAGSNVFIADTVLAKHDETYMPKEVADRLKSQGLWQEGKGQEAKATP.

The Cytoplasmic segment spans residues 1–7 (MTRKQKR). A helical; Signal-anchor for type II membrane protein transmembrane segment spans residues 8–28 (LVVIAGGMSFILAAVLLVMFA). Residues 29-155 (FSQSVAYFYM…GKGQEAKATP (127 aa)) are Periplasmic-facing. Residues histidine 124 and tyrosine 128 each coordinate heme.

It belongs to the CcmE/CycJ family.

The protein resides in the cell inner membrane. In terms of biological role, heme chaperone required for the biogenesis of c-type cytochromes. Transiently binds heme delivered by CcmC and transfers the heme to apo-cytochromes in a process facilitated by CcmF and CcmH. The sequence is that of Cytochrome c-type biogenesis protein CcmE from Rhizobium etli (strain ATCC 51251 / DSM 11541 / JCM 21823 / NBRC 15573 / CFN 42).